Consider the following 515-residue polypeptide: MAARAGFQSVAPSGGAGASGGAGVAAALGPGGTPGPPVRMGPAPGQGLYRSPMPGAAYPRPGMLPGSRMTPQGPSMGPPGYGGNPSVRPGLAQSGMDQSRKRPAPQQIQQVQQQAVQNRNHNAKKKKMADKILPQRIRELVPESQAYMDLLAFERKLDQTIMRKRLDIQEALKRPIKQKRKLRIFISNTFNPAKSDAEDGEGTVASWELRVEGRLLEDAALSKYDATKQKRKFSSFFKSLVIELDKDLYGPDNHLVEWHRTATTQETDGFQVKRPGDVNVRCTVLLMLDYQPPQFKLDPRLARLLGIHTQTRPVIIQALWQYIKTHKLQDPHEREFVLCDKYLQQIFESQRMKFSEIPQRLHALLMPPEPIIINHVISVDPNDQKKTACYDIDVEVDDTLKTQMNSFLLSTASQQEIATLDNKIHETIETINQLKTQREFMLSFARDPQGFINDWLQSQCRDLKTMTDVVGNPEEERRAEFYFQPWAQEAVCRYFYSKVQQRRQELEQALGIRNT.

The tract at residues 1–128 is disordered; the sequence is MAARAGFQSV…RNHNAKKKKM (128 aa). Positions 14 to 23 are enriched in gly residues; sequence GGAGASGGAG. Residues 43-167 are interaction with ESR1, NR1H4, NR3C1, PGR and SMARCA4; the sequence is APGQGLYRSP…DQTIMRKRLD (125 aa). Arg-68 and Arg-88 each carry asymmetric dimethylarginine. Residue Lys-101 forms a Glycyl lysine isopeptide (Lys-Gly) (interchain with G-Cter in SUMO2) linkage. The segment covering 104 to 117 has biased composition (low complexity); sequence APQQIQQVQQQAVQ. Residues 168-474 form an interaction with SMARCC1 and SMARCC2 region; it reads IQEALKRPIK…TMTDVVGNPE (307 aa). A necessary for GR/NR3C1-mediated remodeling and transcription from chromatin; required for GR/NR3C1 interaction with the BRG1/SMARCA4 complex in vivo region spans residues 180 to 515; that stretch reads RKLRIFISNT…LEQALGIRNT (336 aa). Thr-203 is subject to Phosphothreonine. An N6-acetyllysine modification is found at Lys-223. The SWIB/MDM2 domain occupies 290–367; that stretch reads YQPPQFKLDP…PQRLHALLMP (78 aa). Positions 412–440 form a coiled coil; sequence ASQQEIATLDNKIHETIETINQLKTQREF.

Belongs to the SMARCD family. As to quaternary structure, component of the multiprotein chromatin-remodeling complexes SWI/SNF: SWI/SNF-A (BAF), SWI/SNF-B (PBAF) and related complexes. The canonical complex contains a catalytic subunit (either SMARCA4/BRG1/BAF190A or SMARCA2/BRM/BAF190B), and at least SMARCE1, ACTL6A/BAF53, SMARCC1/BAF155, SMARCC2/BAF170, and SMARCB1/SNF5/BAF47. Other subunits specific to each of the complexes may also be present permitting several possible combinations developmentally and tissue specific. Component of the BAF complex, which includes at least actin (ACTB), ARID1A/BAF250A, ARID1B/BAF250B, SMARCA2/BRM, SMARCA4/BRG1/BAF190A, ACTL6A/BAF53, ACTL6B/BAF53B, SMARCE1/BAF57, SMARCC1/BAF155, SMARCC2/BAF170, SMARCB1/SNF5/INI1, and one or more SMARCD1/BAF60A, SMARCD2/BAF60B, or SMARCD3/BAF60C. In muscle cells, the BAF complex also contains DPF3. Component of neural progenitors-specific chromatin remodeling complex (npBAF complex) composed of at least, ARID1A/BAF250A or ARID1B/BAF250B, SMARCD1/BAF60A, SMARCD3/BAF60C, SMARCA2/BRM/BAF190B, SMARCA4/BRG1/BAF190A, SMARCB1/BAF47, SMARCC1/BAF155, SMARCE1/BAF57, SMARCC2/BAF170, PHF10/BAF45A, ACTL6A/BAF53A and actin. Component of neuron-specific chromatin remodeling complex (nBAF complex) composed of at least, ARID1A/BAF250A or ARID1B/BAF250B, SMARCD1/BAF60A, SMARCD3/BAF60C, SMARCA2/BRM/BAF190B, SMARCA4/BRG1/BAF190A, SMARCB1/BAF47, SMARCC1/BAF155, SMARCE1/BAF57, SMARCC2/BAF170, DPF1/BAF45B, DPF3/BAF45C, ACTL6B/BAF53B and actin. Component of the SWI/SNF-B (PBAF) chromatin remodeling complex, at least composed of SMARCA4/BRG1, SMARCB1/BAF47/SNF5, ACTL6A/BAF53A or ACTL6B/BAF53B, SMARCE1/BAF57, SMARCD1/BAF60A, SMARCD2/BAF60B, perhaps SMARCD3/BAF60C, SMARCC1/BAF155, SMARCC2/BAF170, PBRM1/BAF180, ARID2/BAF200 and actin (ACTB). Component of SWI/SNF (GBAF) subcomplex, which includes at least BICRA or BICRAL (mutually exclusive), BRD9, SS18, SMARCA2/BRM, SMARCA4/BRG1/BAF190A, ACTL6A/BAF53, SMARCC1/BAF155, and SMARCD1/BAF60A. Specifically interacts with the VDR heterodimer complex. Interacts with ESR1, NR3C1, NR1H4, PGR, SMARCA4, SMARCC1 and SMARCC2. Interacts with DPF2. Interacts with DPF3a (isoform 2 of DPF3/BAF45C) and with HDGFL2 in a DPF3a-dependent manner. Interacts with FOS, FOSB isoform 1 and 2, FOSL1 and FOSL2. Interacts with AKIRIN2. Ubiquitous.

The protein localises to the nucleus. In terms of biological role, involved in transcriptional activation and repression of select genes by chromatin remodeling (alteration of DNA-nucleosome topology). Component of SWI/SNF chromatin remodeling complexes that carry out key enzymatic activities, changing chromatin structure by altering DNA-histone contacts within a nucleosome in an ATP-dependent manner. Belongs to the neural progenitors-specific chromatin remodeling complex (npBAF complex) and the neuron-specific chromatin remodeling complex (nBAF complex). During neural development a switch from a stem/progenitor to a postmitotic chromatin remodeling mechanism occurs as neurons exit the cell cycle and become committed to their adult state. The transition from proliferating neural stem/progenitor cells to postmitotic neurons requires a switch in subunit composition of the npBAF and nBAF complexes. As neural progenitors exit mitosis and differentiate into neurons, npBAF complexes which contain ACTL6A/BAF53A and PHF10/BAF45A, are exchanged for homologous alternative ACTL6B/BAF53B and DPF1/BAF45B or DPF3/BAF45C subunits in neuron-specific complexes (nBAF). The npBAF complex is essential for the self-renewal/proliferative capacity of the multipotent neural stem cells. The nBAF complex along with CREST plays a role regulating the activity of genes essential for dendrite growth. Has a strong influence on vitamin D-mediated transcriptional activity from an enhancer vitamin D receptor element (VDRE). May be a link between mammalian SWI-SNF-like chromatin remodeling complexes and the vitamin D receptor (VDR) heterodimer. Mediates critical interactions between nuclear receptors and the BRG1/SMARCA4 chromatin-remodeling complex for transactivation. The protein is SWI/SNF-related matrix-associated actin-dependent regulator of chromatin subfamily D member 1 (Smarcd1) of Mus musculus (Mouse).